Reading from the N-terminus, the 103-residue chain is Integration host factor subunit beta (103 aa).

The segment at 62 to 81 (RNPKTGESVALPGKHVPHFK) is disordered.

The protein belongs to the bacterial histone-like protein family. In terms of assembly, heterodimer of an alpha and a beta chain.

Its function is as follows. This protein is one of the two subunits of integration host factor, a specific DNA-binding protein that functions in genetic recombination as well as in transcriptional and translational control. In Xanthomonas campestris pv. campestris (strain B100), this protein is Integration host factor subunit beta.